Reading from the N-terminus, the 896-residue chain is Protein argonaute 9 (896 aa).

A PAZ domain is found at P267–S380. Residues F550–K857 form the Piwi domain.

This sequence belongs to the argonaute family. Ago subfamily. As to expression, expressed in embryonic shoot apex region, pollen and developing ovules.

In terms of biological role, involved in RNA-mediated post-transcriptional gene silencing (PTGS). Main component of the RNA-induced silencing complex (RISC) that binds to a short guide RNA such as a microRNA (miRNA) or small interfering RNA (siRNA). RISC uses the mature miRNA or siRNA as a guide for slicer-directed cleavage of homologous mRNAs to repress gene expression. Associates preferentially with small RNAs of 24 nucleotide in length with a 5' terminal adenosine. Interacts with 24 nucleotide sRNAs derived from transposable elements (TEs). Required to silence pericentrometric-located TEs in female gametes and their accessory cells. Necessary to inactivate a significant proportion of long terminal repeat retrotransposons (LTRs) in the ovule. Required to specify cell fate in ovule. Involved in the control of female gamete formation by restricting the specification of gametophyte precursors in a dosage-dependent, non-cell-autonomous manner. Targeted by turnip yellows virus (TuYV) protein P0 (via F-box-like domain) for probable proteasome degradation and thereby inactivating AGO9 function in RNA silencing. The chain is Protein argonaute 9 (AGO9) from Arabidopsis thaliana (Mouse-ear cress).